Reading from the N-terminus, the 607-residue chain is Elongation factor 4 (607 aa).

The tr-type G domain maps to 6-188; sequence SRIRNFSIIA…AIVARIPPPR (183 aa). GTP contacts are provided by residues 18-23 and 135-138; these read DHGKST and NKID.

It belongs to the TRAFAC class translation factor GTPase superfamily. Classic translation factor GTPase family. LepA subfamily.

Its subcellular location is the cell inner membrane. It catalyses the reaction GTP + H2O = GDP + phosphate + H(+). In terms of biological role, required for accurate and efficient protein synthesis under certain stress conditions. May act as a fidelity factor of the translation reaction, by catalyzing a one-codon backward translocation of tRNAs on improperly translocated ribosomes. Back-translocation proceeds from a post-translocation (POST) complex to a pre-translocation (PRE) complex, thus giving elongation factor G a second chance to translocate the tRNAs correctly. Binds to ribosomes in a GTP-dependent manner. The polypeptide is Elongation factor 4 (Sphingopyxis alaskensis (strain DSM 13593 / LMG 18877 / RB2256) (Sphingomonas alaskensis)).